The chain runs to 354 residues: DNA-binding protein EMBP-1 (354 aa).

3 disordered regions span residues Met1–Gln24, Ser106–Ser193, and Glu230–Gln273. Low complexity-rich tracts occupy residues Ser127–Ser140 and Asn232–Gln245. The span at Met246–Arg265 shows a compositional bias: basic and acidic residues. The bZIP domain maps to Glu250–Leu313. The basic motif stretch occupies residues Lys252–Lys271. The interval Leu278 to Leu299 is leucine-zipper.

It belongs to the bZIP family. Heterodimer.

It localises to the nucleus. Functionally, interacts specifically with the 8-bp sequence 5'-CACGTGGC-3'in the abscisic acid response element (ABARE). Also binds to the hexamer motif 5'-ACGTCA-3' of histone gene promoters. This Triticum aestivum (Wheat) protein is DNA-binding protein EMBP-1.